We begin with the raw amino-acid sequence, 238 residues long: Protein CPn_0658/CP_0089/CPj0658/CpB0684 (238 aa).

This sequence belongs to the chlamydial CPn_0658/CT_538/TC_0825 family.

The protein is Protein CPn_0658/CP_0089/CPj0658/CpB0684 of Chlamydia pneumoniae (Chlamydophila pneumoniae).